A 1732-amino-acid chain; its full sequence is Lys-gingipain W83 (1732 aa).

The first 24 residues, 1–24 (MRKLLLLIAASLLGVGLYAQSAKI), serve as a signal peptide directing secretion. A propeptide spanning residues 25 to 228 (KLDAPTTRTT…ETAYKQLFNR (204 aa)) is cleaved from the precursor. Positions 313, 337, 339, 341, and 343 each coordinate Ca(2+). The active-site Proton donor is H444. The active-site Nucleophile is C477. Ca(2+)-binding residues include F482 and E491. Residues 965 to 988 (DAPNGTPNPNPNPNPNPGTTLSES) are disordered. Positions 970 to 980 (TPNPNPNPNPN) are enriched in pro residues. Positions 988, 990, 1001, 1003, 1005, 1007, 1022, 1024, 1043, 1146, 1147, 1433, 1435, 1446, 1448, 1450, 1452, 1470, 1472, 1490, and 1595 each coordinate Ca(2+).

It belongs to the peptidase C25 family. Proteolytically cleaved into a catalytic subunit and three adhesins. Arg-gingipain is involved in this post-translational processing.

The protein localises to the secreted. It catalyses the reaction Endopeptidase with strict specificity for lysyl bonds.. Its function is as follows. Cysteine proteinase with a strong preference for substrates with Lys in the P1 position. Hydrolyzes bovine hemoglobin, bovine serum albumin, casein, human placental type I collagen and human IgA and IgG. Disrupts the functions of polymorphonuclear leukocytes. May act as a virulence factor in the development of peridontal disease. Involved in the coaggregation of P.gingivalis with other oral bacteria. Has hemolytic activity; this is mediated by the adhesin domains and does not require the catalytic domain. The protein is Lys-gingipain W83 of Porphyromonas gingivalis (Bacteroides gingivalis).